The chain runs to 1058 residues: MSSSPLSKKRRVSGPDPKPGSNCSPAQSALSEVSSVPTNGMAKNGSEADIDESLYSRQLYVLGHEAMKMLQTSSVLVSGLRGLGVEIAKNIILGGVKAVTLHDQGTTQWADLSSQFYLREEDIGKNRAEVSQPRLAELNSYVPVTAYTGPLVEDFLSSFQVVVLTNSPLEAQLRVGEFCHSRGIKLVVADTRGLFGQLFCDFGEEMVLTDSNGEQPLSAMVSMVTKDNPGVVTCLDEARHGFETGDFVSFSEVQGMIQLNGCQPMEIKVLGPYTFSICDTSNFSDYIRGGIVSQVKVPKKISFKSLPASLVEPDFVMTDFAKYSRPAQLHIGFQALHQFCALHNQPPRPRNEEDATELVGLAQAVNARSPPSVKQNSLDEDLIRKLAYVAAGDLAPINAFIGGLAAQEVMKACSGKFMPIMQWLYFDALECLPEDKEALTEEKCLPRQNRYDGQVAVFGSDFQEKLSKQKYFLVGAGAIGCELLKNFAMIGLGCGEGGEVVVTDMDTIEKSNLNRQFLFRPWDVTKLKSDTAAAAVRQMNPYIQVTSHQNRVGPDTERIYDDDFFQNLDGVANALDNIDARMYMDRRCVYYRKPLLESGTLGTKGNVQVVIPFLTESYSSSQDPPEKSIPICTLKNFPNAIEHTLQWARDEFEGLFKQPAENVNQYLTDSKFVERTLRLAGTQPLEVLEAVQRSLVLQRPQTWGDCVTWACHHWHTQYCNNIRQLLHNFPPDQLTSSGAPFWSGPKRCPHPLTFDVNNTLHLDYVMAAANLFAQTYGLTGSQDRAAVASLLQSVQVPEFTPKSGVKIHVSDQELQSANASVDDSRLEELKATLPSPDKLPGFKMYPIDFEKDDDSNFHMDFIVAASNLRAENYDISPADRHKSKLIAGKIIPAIATTTAAVVGLVCLELYKVVQGHQQLDSYKNGFLNLALPFFGFSEPLAAPRHQYYNQEWTLWDRFEVQGLQPNGEEMTLKQFLDYFKTEHKLEITMLSQGVSMLYSFFMPAAKLKERLDQPMTEIVSRVSKRKLGRHVRALVLELCCNDESGEDVEVPYVRYTIR.

Positions 1 to 46 (MSSSPLSKKRRVSGPDPKPGSNCSPAQSALSEVSSVPTNGMAKNGS) are disordered. N-acetylserine is present on serine 2. 5 positions are modified to phosphoserine: serine 4, serine 13, serine 21, serine 24, and serine 46. Polar residues predominate over residues 21–38 (SNCSPAQSALSEVSSVPT). A Phosphotyrosine modification is found at tyrosine 55. 2 repeat units span residues 63 to 199 (GHEA…GQLF) and 459 to 611 (GSDF…QVVI). Residues 63–611 (GHEAMKMLQT…GTKGNVQVVI (549 aa)) form a 2 approximate repeats region. ATP is bound by residues alanine 478, aspartate 504, arginine 515, lysine 528, and 576-577 (DN). An N6-succinyllysine modification is found at lysine 528. Catalysis depends on cysteine 632, which acts as the Glycyl thioester intermediate. Lysine 671 is modified (N6-acetyllysine). The residue at position 800 (threonine 800) is a Phosphothreonine. Residues serine 810, serine 816, serine 820, and serine 835 each carry the phosphoserine modification. Lysine 980 is modified (N6-acetyllysine).

This sequence belongs to the ubiquitin-activating E1 family. In terms of assembly, monomer. Interacts with GAN (via BTB domain). ISGylated. As to expression, ubiquitously expressed. In testis, expressed in A spermatogonia and spermatids but at very low levels in pachytene spermatocytes.

Its subcellular location is the cytoplasm. It localises to the mitochondrion. The protein resides in the nucleus. It carries out the reaction ATP + ubiquitin + [E1 ubiquitin-activating enzyme]-L-cysteine = AMP + diphosphate + S-ubiquitinyl-[E1 ubiquitin-activating enzyme]-L-cysteine.. It participates in protein modification; protein ubiquitination. Catalyzes the first step in ubiquitin conjugation to mark cellular proteins for degradation through the ubiquitin-proteasome system. Activates ubiquitin by first adenylating its C-terminal glycine residue with ATP, and thereafter linking this residue to the side chain of a cysteine residue in E1, yielding a ubiquitin-E1 thioester and free AMP. Essential for the formation of radiation-induced foci, timely DNA repair and for response to replication stress. Promotes the recruitment of TP53BP1 and BRCA1 at DNA damage sites. This chain is Ubiquitin-like modifier-activating enzyme 1 (Uba1), found in Mus musculus (Mouse).